Consider the following 394-residue polypeptide: D-mannose isomerase (394 aa).

Residues His-251 and His-380 each act as proton donor/acceptor in the active site.

This sequence belongs to the N-acylglucosamine 2-epimerase family. Monomer.

The enzyme catalyses D-mannose = D-fructose. The catalysed reaction is D-lyxose = D-xylulose. Functionally, catalyzes the reversible isomerization of D-mannose to D-fructose. Can also isomerize D-lyxose, with lower efficiency. In longer reaction with a higher concentration of enzyme, it can isomerize 4-OH D-mannose derivatives (D-talose and 4-O-monosaccharyl-D-mannose). Cannot use D-glucose. The protein is D-mannose isomerase of Marinomonas mediterranea (strain ATCC 700492 / JCM 21426 / NBRC 103028 / MMB-1).